We begin with the raw amino-acid sequence, 291 residues long: Phosphate import ATP-binding protein PstB (291 aa).

The tract at residues M1–D21 is disordered. Positions Y45–I286 constitute an ABC transporter domain. G77 to S84 lines the ATP pocket.

Belongs to the ABC transporter superfamily. Phosphate importer (TC 3.A.1.7) family. The complex is composed of two ATP-binding proteins (PstB), two transmembrane proteins (PstC and PstA) and a solute-binding protein (PstS).

It localises to the cell membrane. It carries out the reaction phosphate(out) + ATP + H2O = ADP + 2 phosphate(in) + H(+). Part of the ABC transporter complex PstSACB involved in phosphate import. Responsible for energy coupling to the transport system. The chain is Phosphate import ATP-binding protein PstB from Staphylococcus saprophyticus subsp. saprophyticus (strain ATCC 15305 / DSM 20229 / NCIMB 8711 / NCTC 7292 / S-41).